A 337-amino-acid chain; its full sequence is Holliday junction branch migration complex subunit RuvB (337 aa).

Positions 1–179 (MTHQVAVLHQ…FAFSARLSYY (179 aa)) are large ATPase domain (RuvB-L). Residues Leu18, Arg19, Gly60, Lys63, Thr64, Ser65, 126-128 (EDF), Arg169, Tyr179, and Arg216 contribute to the ATP site. Thr64 serves as a coordination point for Mg(2+). Residues 180-250 (SDQDLKEILV…VAEKALAMLL (71 aa)) form a small ATPAse domain (RuvB-S) region. Positions 253–337 (DWGLNEIDIK…KNLLSLGEGQ (85 aa)) are head domain (RuvB-H). 2 residues coordinate DNA: Lys308 and Arg313.

The protein belongs to the RuvB family. In terms of assembly, homohexamer. Forms an RuvA(8)-RuvB(12)-Holliday junction (HJ) complex. HJ DNA is sandwiched between 2 RuvA tetramers; dsDNA enters through RuvA and exits via RuvB. An RuvB hexamer assembles on each DNA strand where it exits the tetramer. Each RuvB hexamer is contacted by two RuvA subunits (via domain III) on 2 adjacent RuvB subunits; this complex drives branch migration. In the full resolvosome a probable DNA-RuvA(4)-RuvB(12)-RuvC(2) complex forms which resolves the HJ.

It localises to the cytoplasm. The catalysed reaction is ATP + H2O = ADP + phosphate + H(+). In terms of biological role, the RuvA-RuvB-RuvC complex processes Holliday junction (HJ) DNA during genetic recombination and DNA repair, while the RuvA-RuvB complex plays an important role in the rescue of blocked DNA replication forks via replication fork reversal (RFR). RuvA specifically binds to HJ cruciform DNA, conferring on it an open structure. The RuvB hexamer acts as an ATP-dependent pump, pulling dsDNA into and through the RuvAB complex. RuvB forms 2 homohexamers on either side of HJ DNA bound by 1 or 2 RuvA tetramers; 4 subunits per hexamer contact DNA at a time. Coordinated motions by a converter formed by DNA-disengaged RuvB subunits stimulates ATP hydrolysis and nucleotide exchange. Immobilization of the converter enables RuvB to convert the ATP-contained energy into a lever motion, pulling 2 nucleotides of DNA out of the RuvA tetramer per ATP hydrolyzed, thus driving DNA branch migration. The RuvB motors rotate together with the DNA substrate, which together with the progressing nucleotide cycle form the mechanistic basis for DNA recombination by continuous HJ branch migration. Branch migration allows RuvC to scan DNA until it finds its consensus sequence, where it cleaves and resolves cruciform DNA. The sequence is that of Holliday junction branch migration complex subunit RuvB from Chlamydia pneumoniae (Chlamydophila pneumoniae).